The primary structure comprises 430 residues: Dihydroorotase (430 aa).

Residues H57 and H59 each contribute to the Zn(2+) site. Substrate contacts are provided by residues 59–61 (HLR) and N91. Zn(2+) contacts are provided by D151, H178, and H231. Residue N277 coordinates substrate. Residue D304 participates in Zn(2+) binding. Residue D304 is part of the active site. Substrate is bound by residues H308 and 322-323 (PG).

This sequence belongs to the metallo-dependent hydrolases superfamily. DHOase family. Class I DHOase subfamily. Zn(2+) serves as cofactor.

The enzyme catalyses (S)-dihydroorotate + H2O = N-carbamoyl-L-aspartate + H(+). Its pathway is pyrimidine metabolism; UMP biosynthesis via de novo pathway; (S)-dihydroorotate from bicarbonate: step 3/3. In terms of biological role, catalyzes the reversible cyclization of carbamoyl aspartate to dihydroorotate. The polypeptide is Dihydroorotase (Mycobacterium bovis (strain ATCC BAA-935 / AF2122/97)).